A 108-amino-acid polypeptide reads, in one-letter code: UPF0060 membrane protein Sputw3181_1172 (108 aa).

4 consecutive transmembrane segments (helical) span residues 3–23, 31–51, 63–83, and 87–107; these read VITTLGLFIITAIAEIVGCYL, GASAWVLLPAAISLALFAWLL, AAYGGVYVTIAIVWLWGVDGI, and RWDLAGVVLMLAGMAVIMFAP.

The protein belongs to the UPF0060 family.

Its subcellular location is the cell inner membrane. The chain is UPF0060 membrane protein Sputw3181_1172 from Shewanella sp. (strain W3-18-1).